The following is a 281-amino-acid chain: Nucleotide-binding protein CTN_0898 (281 aa).

9–16 (GLSGAGKT) lines the ATP pocket. GTP is bound at residue 58–61 (DVRS).

Belongs to the RapZ-like family.

Its function is as follows. Displays ATPase and GTPase activities. This is Nucleotide-binding protein CTN_0898 from Thermotoga neapolitana (strain ATCC 49049 / DSM 4359 / NBRC 107923 / NS-E).